We begin with the raw amino-acid sequence, 390 residues long: Formate-dependent phosphoribosylglycinamide formyltransferase (390 aa).

Residues E14–L15 and E74 each bind N(1)-(5-phospho-beta-D-ribosyl)glycinamide. ATP is bound by residues R106, K147, S152 to Q157, E187 to I190, and E195. Residues D111–M304 form the ATP-grasp domain. The Mg(2+) site is built by E263 and E275. Residues D282, K351, and R358–R359 contribute to the N(1)-(5-phospho-beta-D-ribosyl)glycinamide site.

The protein belongs to the PurK/PurT family. As to quaternary structure, homodimer.

The catalysed reaction is N(1)-(5-phospho-beta-D-ribosyl)glycinamide + formate + ATP = N(2)-formyl-N(1)-(5-phospho-beta-D-ribosyl)glycinamide + ADP + phosphate + H(+). It participates in purine metabolism; IMP biosynthesis via de novo pathway; N(2)-formyl-N(1)-(5-phospho-D-ribosyl)glycinamide from N(1)-(5-phospho-D-ribosyl)glycinamide (formate route): step 1/1. Involved in the de novo purine biosynthesis. Catalyzes the transfer of formate to 5-phospho-ribosyl-glycinamide (GAR), producing 5-phospho-ribosyl-N-formylglycinamide (FGAR). Formate is provided by PurU via hydrolysis of 10-formyl-tetrahydrofolate. This Erythrobacter litoralis (strain HTCC2594) protein is Formate-dependent phosphoribosylglycinamide formyltransferase.